The chain runs to 197 residues: Recombination protein RecR (197 aa).

Residues 56 to 71 form a C4-type zinc finger; the sequence is CPVCGTLDTRAPCSIC. In terms of domain architecture, Toprim spans 79-174; that stretch reads TLICVVRDVA…TVSGLAQGVP (96 aa).

This sequence belongs to the RecR family.

May play a role in DNA repair. It seems to be involved in an RecBC-independent recombinational process of DNA repair. It may act with RecF and RecO. The sequence is that of Recombination protein RecR from Rhodospirillum rubrum (strain ATCC 11170 / ATH 1.1.1 / DSM 467 / LMG 4362 / NCIMB 8255 / S1).